We begin with the raw amino-acid sequence, 699 residues long: UvrABC system protein C (699 aa).

Positions 1–51 (MIQHPTDTPEVAADAAAEPERAAGAAGATPQPSQDAVEPAADVDAATASLA) are enriched in low complexity. The interval 1–59 (MIQHPTDTPEVAADAAAEPERAAGAAGATPQPSQDAVEPAADVDAATASLAAEDDDEPV) is disordered. A GIY-YIG domain is found at 92-170 (TSPGVYRMLN…IKQLRPRFNV (79 aa)). One can recognise a UVR domain in the interval 280 to 315 (RLVKQELAGEMEKASAELEFETAALYRDRLAALSAI).

It belongs to the UvrC family. As to quaternary structure, interacts with UvrB in an incision complex.

It localises to the cytoplasm. In terms of biological role, the UvrABC repair system catalyzes the recognition and processing of DNA lesions. UvrC both incises the 5' and 3' sides of the lesion. The N-terminal half is responsible for the 3' incision and the C-terminal half is responsible for the 5' incision. In Rhodopseudomonas palustris (strain BisB18), this protein is UvrABC system protein C.